Reading from the N-terminus, the 38-residue chain is Large ribosomal subunit protein bL36 (38 aa).

It belongs to the bacterial ribosomal protein bL36 family.

The chain is Large ribosomal subunit protein bL36 from Proteus mirabilis (strain HI4320).